Reading from the N-terminus, the 99-residue chain is Accessory protein p12I (99 aa).

The chain crosses the membrane as a helical span at residues 3–23 (FRLLSPLSPLALTALLLFLLP). Short sequence motifs (SH3-binding) lie at residues 4 to 11 (RLLSPLSP) and 33 to 38 (RPPPAP). A helical membrane pass occupies residues 48 to 68 (ILSGLLFLLFLPLFFSLPLLL). Short sequence motifs (SH3-binding) lie at residues 70-77 (PSLPITMR) and 88-93 (KAPSQP). K88 is covalently cross-linked (Glycyl lysine isopeptide (Lys-Gly) (interchain with G-Cter in ubiquitin); in isolate LAF).

This sequence belongs to the HTLV-1 accessory protein p12I family. As to quaternary structure, p12I is a homodimer. Interacts with human CANX, CALR, ATP6V0C, IL2RB, IL2RG. Binds to MHC-I heavy chains HLA-A2, HLA-B7 and HLA-Cw4. Ubiquitinated; a fraction of P12I is degraded via the ubiquitin system.

The protein localises to the host endoplasmic reticulum membrane. The protein resides in the host Golgi apparatus. It localises to the host cis-Golgi network membrane. Its function is as follows. p12I is a modulator of T-lymphocyte proliferation and immune function and may contribute to establish a persistent infection. Binds and down-modulates cell surface expression of interleukin-2 receptors IL2RB and IL2RG. Also down-modulates cell surface MHC-I molecules by binding to free immature MHC-I heavy chains in the ER and targeting them to the proteasome for degradation. Binding to IL2RB mediates recruitment of JAK1 and JAK3. As a result of this interaction, p12I increases DNA-binding and transcriptional activity of STAT5. The polypeptide is Accessory protein p12I (Homo sapiens (Human)).